A 433-amino-acid chain; its full sequence is 3-phosphoshikimate 1-carboxyvinyltransferase (433 aa).

3-phosphoshikimate is bound by residues K22, S23, and R27. K22 provides a ligand contact to phosphoenolpyruvate. Residues G95 and R123 each contribute to the phosphoenolpyruvate site. Positions 167, 169, 315, and 342 each coordinate 3-phosphoshikimate. Position 169 (Q169) interacts with phosphoenolpyruvate. D315 serves as the catalytic Proton acceptor. Residues R346 and R387 each contribute to the phosphoenolpyruvate site.

It belongs to the EPSP synthase family. As to quaternary structure, monomer.

The protein localises to the cytoplasm. The enzyme catalyses 3-phosphoshikimate + phosphoenolpyruvate = 5-O-(1-carboxyvinyl)-3-phosphoshikimate + phosphate. It functions in the pathway metabolic intermediate biosynthesis; chorismate biosynthesis; chorismate from D-erythrose 4-phosphate and phosphoenolpyruvate: step 6/7. In terms of biological role, catalyzes the transfer of the enolpyruvyl moiety of phosphoenolpyruvate (PEP) to the 5-hydroxyl of shikimate-3-phosphate (S3P) to produce enolpyruvyl shikimate-3-phosphate and inorganic phosphate. This chain is 3-phosphoshikimate 1-carboxyvinyltransferase, found in Legionella pneumophila (strain Corby).